The following is a 330-amino-acid chain: Complement factor H-related protein 3 (330 aa).

The first 18 residues, 1–18 (MLLLINVILTLWVSCANG), serve as a signal peptide directing secretion. Sushi domains are found at residues 22 to 84 (PCDF…VPCL), 85 to 142 (RKCY…RCIR), 144 to 205 (RTCS…ICIN), 208 to 266 (EKCG…RCIH), and 267 to 330 (PCII…PRCE). 6 disulfides stabilise this stretch: C23–C72, C55–C83, C87–C129, C114–C140, C146–C192, and C175–C203. A glycan (N-linked (GlcNAc...) asparagine) is linked at N108. N-linked (GlcNAc...) asparagine glycans are attached at residues N185 and N205. Cystine bridges form between C210-C253, C239-C264, C268-C319, and C302-C329. Residue N309 is glycosylated (N-linked (GlcNAc...) asparagine).

As to expression, expressed by the liver and secreted in plasma.

It localises to the secreted. Functionally, might be involved in complement regulation. This Homo sapiens (Human) protein is Complement factor H-related protein 3 (CFHR3).